We begin with the raw amino-acid sequence, 173 residues long: Protein-export protein SecB (173 aa).

It belongs to the SecB family. As to quaternary structure, homotetramer, a dimer of dimers. One homotetramer interacts with 1 SecA dimer.

Its subcellular location is the cytoplasm. Functionally, one of the proteins required for the normal export of preproteins out of the cell cytoplasm. It is a molecular chaperone that binds to a subset of precursor proteins, maintaining them in a translocation-competent state. It also specifically binds to its receptor SecA. This Ralstonia nicotianae (strain ATCC BAA-1114 / GMI1000) (Ralstonia solanacearum) protein is Protein-export protein SecB.